Consider the following 225-residue polypeptide: Cytidylate kinase (225 aa).

10–18 (GPASSGKST) provides a ligand contact to ATP.

This sequence belongs to the cytidylate kinase family. Type 1 subfamily.

The protein localises to the cytoplasm. The catalysed reaction is CMP + ATP = CDP + ADP. It carries out the reaction dCMP + ATP = dCDP + ADP. The protein is Cytidylate kinase of Streptococcus gordonii (strain Challis / ATCC 35105 / BCRC 15272 / CH1 / DL1 / V288).